The following is a 610-amino-acid chain: Sodium-coupled monocarboxylate transporter 1 (610 aa).

Topologically, residues 1 to 9 are extracellular; it reads MDTPRGIGT. Residues 10–30 traverse the membrane as a helical segment; the sequence is FVVWDYVVFAGMLVISAAIGI. The Cytoplasmic segment spans residues 31-51; it reads YYAFAGGGQQTSKDFLMGGRR. The chain crosses the membrane as a helical span at residues 52–72; that stretch reads MTAVPVALSLTASFMSAVTVL. Over 73 to 83 the chain is Extracellular; sequence GTPSEVYRFGA. The chain crosses the membrane as a helical span at residues 84-104; it reads IFSIFAFTYFFVVVISAEVFL. Topologically, residues 105-132 are cytoplasmic; the sequence is PVFYKLGITSTYEYLELRFNKCVRLCGT. The helical transmembrane segment at 133-153 threads the bilayer; that stretch reads VLFIVQTILYTGIVIYAPALA. The Extracellular portion of the chain corresponds to 154–161; sequence LNQVTGFD. Residues 162-182 traverse the membrane as a helical segment; sequence LWGAVVATGVVCTFYCTLGGL. The Cytoplasmic portion of the chain corresponds to 183–189; that stretch reads KAVIWTD. A helical membrane pass occupies residues 190–210; the sequence is VFQVGIMVAGFASVIIQAVVM. The Extracellular segment spans residues 211–239; sequence QGGISTILNDAYDGGRLNFWNFNPNPLQR. A helical membrane pass occupies residues 240–260; the sequence is HTFWTIIIGGTFTWTSIYGVN. The Cytoplasmic portion of the chain corresponds to 261 to 279; the sequence is QSQVQRYISCKSRFQAKLS. The chain crosses the membrane as a helical span at residues 280–300; it reads LYINLVGLWAILTCSVFCGLA. Residues 301 to 336 lie on the Extracellular side of the membrane; the sequence is LYSRYHDCDPWTAKKVSAPDQLMPYLVLDILQDYPG. The chain crosses the membrane as a helical span at residues 337 to 359; sequence LPGLFVACAYSGTLSTVSSSINA. The Cytoplasmic portion of the chain corresponds to 360–389; sequence LAAVTVEDLIKPYFRSLSERSLSWISQGMS. The helical transmembrane segment at 390-410 threads the bilayer; that stretch reads VVYGALCIGMAALASLMGALL. Residues 411–415 lie on the Extracellular side of the membrane; sequence QAALS. The chain crosses the membrane as a helical span at residues 416-436; it reads VFGMVGGPLMGLFALGILVPF. Over 437–439 the chain is Cytoplasmic; sequence ANS. Residues 440-460 form a helical membrane-spanning segment; that stretch reads IGALVGLMAGFAISLWVGIGA. The Extracellular portion of the chain corresponds to 461–518; it reads QIYPPLPERTLPLHLDIQGCNSTYNETNLMTTTEMPFTTSVFQIYNVQRTPLMDNWYS. Residue asparagine 485 is glycosylated (N-linked (GlcNAc...) asparagine). Residues 519–539 traverse the membrane as a helical segment; it reads LSYLYFSTVGTLVTLLVGILV. Residues 540-610 are Cytoplasmic-facing; that stretch reads SLSTGGRKQN…QSGKSNGTRL (71 aa). Positions 585 to 610 are disordered; that stretch reads GGTDNPAFNHIELNSDQSGKSNGTRL. Residues 596–610 are compositionally biased toward polar residues; it reads ELNSDQSGKSNGTRL. Positions 608 to 610 match the PDZ-binding motif; the sequence is TRL.

Belongs to the sodium:solute symporter (SSF) (TC 2.A.21) family. As to quaternary structure, interacts (via PDZ-binding motif) with PDZK1 (via PDZ domains 1 and 3); interaction increases nicotinate transport activity of SLC5A8. As to expression, expressed in normal thyroid, localized at the apical pole of thyroid cells facing the colloid lumen, but expression profoundly decreased in thyroid carcinomas. Expressed in normal colon but absent in colon aberrant crypt foci and colon cancers. Present in normal kidney cortex, brain, prostate, gastric mucosa and breast tissue but was significantly down-regulated in primary gliomas, gastric cancer, prostate tumors and breast tumors.

It is found in the apical cell membrane. The catalysed reaction is (S)-lactate(out) + 2 Na(+)(out) = (S)-lactate(in) + 2 Na(+)(in). It carries out the reaction propanoate(out) + 2 Na(+)(out) = propanoate(in) + 2 Na(+)(in). It catalyses the reaction pyruvate(out) + 2 Na(+)(out) = pyruvate(in) + 2 Na(+)(in). The enzyme catalyses acetate(out) + 2 Na(+)(out) = acetate(in) + 2 Na(+)(in). The catalysed reaction is butanoate(out) + 2 Na(+)(out) = butanoate(in) + 2 Na(+)(in). It carries out the reaction nicotinate(out) + 2 Na(+)(out) = nicotinate(in) + 2 Na(+)(in). It catalyses the reaction (R)-3-hydroxybutanoate(out) + 2 Na(+)(out) = (R)-3-hydroxybutanoate(in) + 2 Na(+)(in). The enzyme catalyses acetoacetate(out) + 2 Na(+)(out) = acetoacetate(in) + 2 Na(+)(in). The catalysed reaction is 4-methyl-2-oxopentanoate(out) + 2 Na(+)(out) = 4-methyl-2-oxopentanoate(in) + 2 Na(+)(in). It carries out the reaction 5-oxo-L-proline(out) + 2 Na(+)(out) = 5-oxo-L-proline(in) + 2 Na(+)(in). It catalyses the reaction iodide(out) = iodide(in). The enzyme catalyses chloride(in) = chloride(out). The catalysed reaction is nitrate(in) = nitrate(out). It carries out the reaction bromide(in) = bromide(out). Increase of iodide influx inhibited by addition of perchlorate (NaClO(4)), a competitive inhibitor of iodide uptake catalyzed by sodium iodide symporter (NIS). Cotransport of monocarboxylates and nicotinate strongly inhibited by probenecid, nonsteroid anti-inflammatory drugs (ibuprofen, fenoprofen, ketprofen, naproxen) in a Na(+)-dependent manner or by prolonged exposure to external concentrations of monocarboxylates. Acts as an electrogenic sodium (Na(+)) and chloride (Cl-)-dependent sodium-coupled solute transporter, including transport of monocarboxylates (short-chain fatty acids including L-lactate, D-lactate, pyruvate, acetate, propionate, valerate and butyrate), mocarboxylate drugs (nicotinate, benzoate, salicylate and 5-aminosalicylate) and ketone bodies (beta-D-hydroxybutyrate, acetoacetate and alpha-ketoisocaproate), with a Na(+):substrate stoichiometry of between 4:1 and 2:1. Catalyzes passive carrier mediated diffusion of iodide. Mediates iodide transport from the thyrocyte into the colloid lumen through the apical membrane. May be responsible for the absorption of D-lactate and monocarboxylate drugs from the intestinal tract. Acts as a tumor suppressor, suppressing colony formation in colon cancer, prostate cancer and glioma cell lines. May play a critical role in the entry of L-lactate and ketone bodies into neurons by a process driven by an electrochemical Na(+) gradient and hence contribute to the maintenance of the energy status and function of neurons. Mediates sodium-coupled electrogenic transport of pyroglutamate (5-oxo-L-proline). Can mediate the transport of chloride, bromide, iodide and nitrate ions when the external concentration of sodium ions is reduced. The polypeptide is Sodium-coupled monocarboxylate transporter 1 (Homo sapiens (Human)).